Reading from the N-terminus, the 255-residue chain is Tablysin 15 (255 aa).

The N-terminal stretch at 1-23 (MTSIPVSSFLLAALVLQYATSDA) is a signal peptide. Cystine bridges form between C27–C40, C31–C117, and C49–C110. The Cell attachment site signature appears at 32–34 (RGD). The region spanning 67–211 (LSKINDVRDH…KARALLTCNF (145 aa)) is the SCP domain. Positions 82, 153, and 156 each coordinate leukotriene E4. Cystine bridges form between C192–C209 and C232–C243.

This sequence belongs to the CRISP family. Expressed in salivary glands.

The protein localises to the secreted. Functionally, anti-inflammatory scavenger of eicosanoids and antithrombotic protein that inhibits platelets aggregation induced by collagen, ADP and convulxin (GPVI agonist). Exhibits high affinity binding for glycoprotein IIb-IIIa receptor (ITGA2B/ITGB3) and endothelial cell alphaVbeta3 (ITGAV/ITGB3) integrins, but not for alpha-5/beta-1 or alpha-2/beta-1. Accordingly, it blocks endothelial cell adhesion to vitronectin (IC(50)~1 nM) and marginally to fibronectin (IC(50)~1 uM), but not to collagen. It also inhibits fibroblast growth factor (FGF)-induced endothelial cell proliferation, and attenuates tube formation in vitro. In addition, it dose-dependently attenuates thrombus formation to collagen under flow. Also binds proinflammatory cysteinyl leukotrienes (leukotrienes C4 (LTC4), D4 (LTD4) and E4 (LTE4)) with submicromolar affinities. This is Tablysin 15 from Tabanus yao (Horsefly).